The primary structure comprises 131 residues: Agouti-signaling protein (131 aa).

Positions 1–20 are cleaved as a signal peptide; the sequence is MNIFRLLLATLLVSLCFLTA. Asparagine 38 is a glycosylation site (N-linked (GlcNAc...) asparagine). The disordered stretch occupies residues 57 to 104; sequence KSKKISRKEAEKKRSSKKKASMKNVARPRPPPPNPCVATRNSCKSPAP. Disulfide bonds link cysteine 92–cysteine 107, cysteine 99–cysteine 113, cysteine 106–cysteine 124, cysteine 110–cysteine 131, and cysteine 115–cysteine 122. Residues 92-131 enclose the Agouti domain; that stretch reads CVATRNSCKSPAPACCDPCASCQCRFFRSACTCRVLSPSC.

Its subcellular location is the secreted. Functionally, involved in the regulation of melanogenesis. The binding of ASP to MC1R precludes alpha-MSH initiated signaling and thus blocks production of cAMP, leading to a down-regulation of eumelanogenesis (brown/black pigment) and thus increasing synthesis of pheomelanin (yellow/red pigment). This is Agouti-signaling protein (ASIP) from Vulpes vulpes (Red fox).